We begin with the raw amino-acid sequence, 314 residues long: DNA-directed RNA polymerase subunit alpha (314 aa).

The segment at M1–T227 is alpha N-terminal domain (alpha-NTD). Residues Q244–D314 form an alpha C-terminal domain (alpha-CTD) region.

Belongs to the RNA polymerase alpha chain family. Homodimer. The RNAP catalytic core consists of 2 alpha, 1 beta, 1 beta' and 1 omega subunit. When a sigma factor is associated with the core the holoenzyme is formed, which can initiate transcription.

It carries out the reaction RNA(n) + a ribonucleoside 5'-triphosphate = RNA(n+1) + diphosphate. DNA-dependent RNA polymerase catalyzes the transcription of DNA into RNA using the four ribonucleoside triphosphates as substrates. The polypeptide is DNA-directed RNA polymerase subunit alpha (Heliobacterium modesticaldum (strain ATCC 51547 / Ice1)).